The chain runs to 445 residues: Tubulin beta-3 chain (445 aa).

Residues Q11, E69, S138, G142, T143, G144, N204, and N226 each contribute to the GTP site. Residue E69 coordinates Mg(2+). Over residues 417 to 426 (DLVSEYQQYQ) the composition is skewed to polar residues. The tract at residues 417 to 445 (DLVSEYQQYQEASADDEADEFDEEEGDEE) is disordered. The segment covering 429-445 (SADDEADEFDEEEGDEE) has biased composition (acidic residues).

It belongs to the tubulin family. In terms of assembly, dimer of alpha and beta chains. A typical microtubule is a hollow water-filled tube with an outer diameter of 25 nm and an inner diameter of 15 nM. Alpha-beta heterodimers associate head-to-tail to form protofilaments running lengthwise along the microtubule wall with the beta-tubulin subunit facing the microtubule plus end conferring a structural polarity. Microtubules usually have 13 protofilaments but different protofilament numbers can be found in some organisms and specialized cells. It depends on Mg(2+) as a cofactor.

It localises to the cytoplasm. The protein localises to the cytoskeleton. In terms of biological role, tubulin is the major constituent of microtubules, a cylinder consisting of laterally associated linear protofilaments composed of alpha- and beta-tubulin heterodimers. Microtubules grow by the addition of GTP-tubulin dimers to the microtubule end, where a stabilizing cap forms. Below the cap, tubulin dimers are in GDP-bound state, owing to GTPase activity of alpha-tubulin. In Oomycete-like sp. (strain MacKay2000), this protein is Tubulin beta-3 chain (TUBB3).